The sequence spans 302 residues: Sulfate adenylyltransferase subunit 2 (302 aa).

The segment at 280 to 302 is disordered; sequence RQGRLIDSDQSASMEQKKRQGYF.

Belongs to the PAPS reductase family. CysD subfamily. Heterodimer composed of CysD, the smaller subunit, and CysN.

The catalysed reaction is sulfate + ATP + H(+) = adenosine 5'-phosphosulfate + diphosphate. The protein operates within sulfur metabolism; hydrogen sulfide biosynthesis; sulfite from sulfate: step 1/3. In terms of biological role, with CysN forms the ATP sulfurylase (ATPS) that catalyzes the adenylation of sulfate producing adenosine 5'-phosphosulfate (APS) and diphosphate, the first enzymatic step in sulfur assimilation pathway. APS synthesis involves the formation of a high-energy phosphoric-sulfuric acid anhydride bond driven by GTP hydrolysis by CysN coupled to ATP hydrolysis by CysD. This Shewanella frigidimarina (strain NCIMB 400) protein is Sulfate adenylyltransferase subunit 2.